A 182-amino-acid polypeptide reads, in one-letter code: RNA chaperone ProQ (182 aa).

The interval 125-160 (EQRKEQRKDFFKKKAREERNAKTMNKAVKKGSPKKD) is disordered.

This sequence belongs to the ProQ family.

It is found in the cytoplasm. Functionally, RNA chaperone with significant RNA binding, RNA strand exchange and RNA duplexing activities. The sequence is that of RNA chaperone ProQ from Haemophilus ducreyi (strain 35000HP / ATCC 700724).